The sequence spans 307 residues: Protoheme IX farnesyltransferase (307 aa).

A run of 8 helical transmembrane segments spans residues 24–44, 52–72, 115–135, 152–172, 179–199, 224–244, 245–265, and 284–304; these read ISLL…VGLV, PVIA…AGAL, VVLG…TIFF, IVIG…AASG, VILV…LSLY, QILL…MLGE, AGLA…LLAV, and FGFS…EALV.

Belongs to the UbiA prenyltransferase family. Protoheme IX farnesyltransferase subfamily.

Its subcellular location is the cell inner membrane. It carries out the reaction heme b + (2E,6E)-farnesyl diphosphate + H2O = Fe(II)-heme o + diphosphate. Its pathway is porphyrin-containing compound metabolism; heme O biosynthesis; heme O from protoheme: step 1/1. Its function is as follows. Converts heme B (protoheme IX) to heme O by substitution of the vinyl group on carbon 2 of heme B porphyrin ring with a hydroxyethyl farnesyl side group. This Azorhizobium caulinodans (strain ATCC 43989 / DSM 5975 / JCM 20966 / LMG 6465 / NBRC 14845 / NCIMB 13405 / ORS 571) protein is Protoheme IX farnesyltransferase.